Here is a 585-residue protein sequence, read N- to C-terminus: Suppressor of mec-8 and unc-52 protein homolog 2 (585 aa).

Residues 1–14 (MKPSKSHHKEKTAR) are compositionally biased toward basic residues. Disordered stretches follow at residues 1–52 (MKPS…SSFH) and 219–324 (KKKK…PRDK). Basic and acidic residues predominate over residues 15 to 39 (RREEKLEESDNPKYRDRAKERRENQ). R-[ED] repeat units lie at residues 16-17 (RE), 29-30 (RD), 36-37 (RE), and 258-259 (RE). Basic and acidic residues predominate over residues 276–288 (LSTKQEEPPVART). R-[ED] repeat units lie at residues 322 to 323 (RD), 436 to 437 (RD), 445 to 446 (RE), 450 to 451 (RE), 540 to 541 (RD), and 542 to 543 (RD). Residues 523 to 585 (FQFGVKMQDG…EAQTPKRSKH (63 aa)) form a disordered region. A compositionally biased stretch (basic and acidic residues) spans 530–548 (QDGRKTRKQNRDRDQKLNN). Residue Thr579 is modified to Phosphothreonine.

The protein belongs to the RED family. Component of the spliceosome. Interacts with SMU1. As to expression, highly expressed in seedlings at 7 days after germination, young flowers before anthesis and developing siliques. Expressed at lower levels in roots, expanding leaves, open flowers, dry seeds and inflorescences. Not detected in senescing leaves.

The protein resides in the nucleus. Its function is as follows. Auxiliary spliceosomal protein involved in splicing of specific pre-mRNAs that affect multiple aspects of development. This Arabidopsis thaliana (Mouse-ear cress) protein is Suppressor of mec-8 and unc-52 protein homolog 2 (SMU2).